The following is a 453-amino-acid chain: Phosphoglucosamine mutase (453 aa).

The active-site Phosphoserine intermediate is serine 100. Residues serine 100, aspartate 239, aspartate 241, and aspartate 243 each contribute to the Mg(2+) site. The residue at position 100 (serine 100) is a Phosphoserine.

The protein belongs to the phosphohexose mutase family. Requires Mg(2+) as cofactor. Activated by phosphorylation.

The catalysed reaction is alpha-D-glucosamine 1-phosphate = D-glucosamine 6-phosphate. Its function is as follows. Catalyzes the conversion of glucosamine-6-phosphate to glucosamine-1-phosphate. The polypeptide is Phosphoglucosamine mutase (Buchnera aphidicola subsp. Baizongia pistaciae (strain Bp)).